The following is a 205-amino-acid chain: Glycerol-3-phosphate acyltransferase (205 aa).

The Periplasmic segment spans residues 1–3 (MSA). The helical transmembrane segment at 4–24 (IAPGMILFAYLCGSISSAILV) threads the bilayer. The Cytoplasmic segment spans residues 25–52 (CRIAGLPDPRESGSGNPGATNVLRIGGK). The chain crosses the membrane as a helical span at residues 53-73 (GAAVAVLIFDILKGMLPVWGA). Topologically, residues 74–80 (YALGITP) are periplasmic. The chain crosses the membrane as a helical span at residues 81–101 (FWLGLIAIAACLGHIWPVFFG). Residues 102–111 (FKGGKGVATA) lie on the Cytoplasmic side of the membrane. A helical membrane pass occupies residues 112–132 (FGAIAPIGWDLTGVIAGTWLL). Over 133–137 (TVLLS) the chain is Periplasmic. Residues 138–158 (GYSSLGAIVSALIAPFYVWWF) form a helical membrane-spanning segment. Residues 159–205 (KPQFTFPVSMLSCLILLRHHDNIQRLWRRQETKIWTKLKKKREKESK) are Cytoplasmic-facing.

Belongs to the PlsY family. As to quaternary structure, probably interacts with PlsX.

It is found in the cell inner membrane. It carries out the reaction sn-glycerol 3-phosphate + an acyl-CoA = a 1-acyl-sn-glycero-3-phosphate + CoA. The enzyme catalyses a fatty acyl-[ACP] + sn-glycerol 3-phosphate = a 1-acyl-sn-glycero-3-phosphate + holo-[ACP]. It functions in the pathway lipid metabolism; phospholipid metabolism. In terms of biological role, catalyzes the transfer of an acyl group from acyl-ACP to glycerol-3-phosphate (G3P) to form lysophosphatidic acid (LPA). This enzyme can also utilize acyl-CoA as fatty acyl donor, but not acyl-PO(4). In Salmonella arizonae (strain ATCC BAA-731 / CDC346-86 / RSK2980), this protein is Glycerol-3-phosphate acyltransferase.